The chain runs to 475 residues: tRNA-2-methylthio-N(6)-dimethylallyladenosine synthase (475 aa).

Positions 1–20 (MEQNLTTERSETSSSRAGTA) are disordered. The 121-residue stretch at 25–145 (KKVFVKTYGC…LPSVVTRARA (121 aa)) folds into the MTTase N-terminal domain. [4Fe-4S] cluster-binding residues include Cys-34, Cys-70, Cys-108, Cys-186, Cys-190, and Cys-193. A Radical SAM core domain is found at 172 to 404 (RSRGVTAFLT…QALLAEQQRA (233 aa)). The 63-residue stretch at 407 to 469 (ESLVGTEIDL…GHSLFCEPAG (63 aa)) folds into the TRAM domain.

The protein belongs to the methylthiotransferase family. MiaB subfamily. As to quaternary structure, monomer. Requires [4Fe-4S] cluster as cofactor.

Its subcellular location is the cytoplasm. It carries out the reaction N(6)-dimethylallyladenosine(37) in tRNA + (sulfur carrier)-SH + AH2 + 2 S-adenosyl-L-methionine = 2-methylsulfanyl-N(6)-dimethylallyladenosine(37) in tRNA + (sulfur carrier)-H + 5'-deoxyadenosine + L-methionine + A + S-adenosyl-L-homocysteine + 2 H(+). Functionally, catalyzes the methylthiolation of N6-(dimethylallyl)adenosine (i(6)A), leading to the formation of 2-methylthio-N6-(dimethylallyl)adenosine (ms(2)i(6)A) at position 37 in tRNAs that read codons beginning with uridine. The chain is tRNA-2-methylthio-N(6)-dimethylallyladenosine synthase from Chelativorans sp. (strain BNC1).